We begin with the raw amino-acid sequence, 85 residues long: Large ribosomal subunit protein bL27 (85 aa).

A disordered region spans residues 1-21; it reads MAHKKGVGSTRNGRDSDGQRL.

This sequence belongs to the bacterial ribosomal protein bL27 family.

The protein is Large ribosomal subunit protein bL27 of Geotalea uraniireducens (strain Rf4) (Geobacter uraniireducens).